A 439-amino-acid chain; its full sequence is CBL-interacting serine/threonine-protein kinase 20 (439 aa).

Residues 12–266 form the Protein kinase domain; it reads YELGRLLGQG…IEKIMENSWF (255 aa). Residues 18-26 and lysine 41 contribute to the ATP site; that span reads LGQGTFAKV. The Proton acceptor role is filled by aspartate 134. Positions 152–181 are activation loop; it reads DFGLSALRESKQQDGLLHTTCGTPAYVAPE. Serine 156 is subject to Phosphoserine. At threonine 170 the chain carries Phosphothreonine. An NAF domain is found at 297–322; the sequence is VKPMSYNAFDLISSLSQGFDLSGLFE. The tract at residues 326–356 is PPI; sequence RSESKFTTKKDAKEIVSKFEEIATSSERFNL.

It belongs to the protein kinase superfamily. CAMK Ser/Thr protein kinase family. SNF1 subfamily. It depends on Mn(2+) as a cofactor. Autophosphorylated. As to expression, confined to mature leaves.

The catalysed reaction is L-seryl-[protein] + ATP = O-phospho-L-seryl-[protein] + ADP + H(+). It catalyses the reaction L-threonyl-[protein] + ATP = O-phospho-L-threonyl-[protein] + ADP + H(+). Functionally, CIPK serine-threonine protein kinases interact with CBL proteins. Binding of a CBL protein to the regulatory NAF domain of CIPK protein lead to the activation of the kinase in a calcium-dependent manner. Required for the abscisic acid-mediated (ABA) signaling pathway involved in seed germination and growth elongation inhibition. This is CBL-interacting serine/threonine-protein kinase 20 (CIPK20) from Arabidopsis thaliana (Mouse-ear cress).